A 214-amino-acid polypeptide reads, in one-letter code: tRNA (guanine-N(7)-)-methyltransferase (214 aa).

The S-adenosyl-L-methionine site is built by E44, E69, D96, and D118. Residue D118 is part of the active site. Residues K122, D154, and 191–194 (TEYE) each bind substrate.

Belongs to the class I-like SAM-binding methyltransferase superfamily. TrmB family.

The catalysed reaction is guanosine(46) in tRNA + S-adenosyl-L-methionine = N(7)-methylguanosine(46) in tRNA + S-adenosyl-L-homocysteine. It participates in tRNA modification; N(7)-methylguanine-tRNA biosynthesis. Catalyzes the formation of N(7)-methylguanine at position 46 (m7G46) in tRNA. The sequence is that of tRNA (guanine-N(7)-)-methyltransferase from Listeria monocytogenes serotype 4a (strain HCC23).